Reading from the N-terminus, the 484-residue chain is Probable efflux pump outer membrane protein TtgC (484 aa).

Residues 1 to 17 form the signal peptide; that stretch reads MTKSLLSLAVTAFILGG. A lipid anchor (N-palmitoyl cysteine) is attached at Cys-18. Residue Cys-18 is the site of S-diacylglycerol cysteine attachment.

This sequence belongs to the outer membrane factor (OMF) (TC 1.B.17) family.

It is found in the cell outer membrane. Its function is as follows. Probable outer membrane component of the TtgABC efflux pump with unknown specificity. This is Probable efflux pump outer membrane protein TtgC (ttgC) from Pseudomonas putida (strain ATCC 47054 / DSM 6125 / CFBP 8728 / NCIMB 11950 / KT2440).